The chain runs to 338 residues: Lipoate-protein ligase A (338 aa).

One can recognise a BPL/LPL catalytic domain in the interval 29–216; it reads PATQRVLFLW…AFFAHYGEHV (188 aa). ATP-binding positions include R71, 76–79, and K134; that span reads GAVF. K134 contributes to the (R)-lipoate binding site.

The protein belongs to the LplA family. As to quaternary structure, monomer.

Its subcellular location is the cytoplasm. It catalyses the reaction L-lysyl-[lipoyl-carrier protein] + (R)-lipoate + ATP = N(6)-[(R)-lipoyl]-L-lysyl-[lipoyl-carrier protein] + AMP + diphosphate + H(+). The protein operates within protein modification; protein lipoylation via exogenous pathway; protein N(6)-(lipoyl)lysine from lipoate: step 1/2. It participates in protein modification; protein lipoylation via exogenous pathway; protein N(6)-(lipoyl)lysine from lipoate: step 2/2. Its function is as follows. Catalyzes both the ATP-dependent activation of exogenously supplied lipoate to lipoyl-AMP and the transfer of the activated lipoyl onto the lipoyl domains of lipoate-dependent enzymes. In Escherichia coli O17:K52:H18 (strain UMN026 / ExPEC), this protein is Lipoate-protein ligase A.